The sequence spans 513 residues: NAD(P)H-quinone oxidoreductase subunit 2 (513 aa).

Helical transmembrane passes span 15 to 35, 43 to 63, 80 to 100, 110 to 130, 133 to 153, 168 to 188, 211 to 231, 245 to 265, 281 to 301, 307 to 327, 335 to 355, 379 to 399, 401 to 421, and 467 to 487; these read VIWPEGILIITLMVILIGDLI, WLPYVAIAGLLAAVVALYFTW, LSIVFRAIIALSTASTVLMSI, LAEFLAIMLTATLGGMFLSGA, LVMIFISLEMLSISSYLMTGY, LLIGASSSAIFLYGVSLLYGL, LALAIALVFVIAGIAFKISAV, PTPVVAFLSVGSKAAGFALAI, FIFIALAILSMILGNVVALAQ, MLAYSSIGQAGFVMIGLTAGT, IFYLLIYLFMNLGAFACVILF, LCLSICLLSLGGIPPLAGFFG, IYLFWAGWQAGLYALVLVGLV, and VGIVLSLVATSLAGILSNPLF.

It belongs to the complex I subunit 2 family. NDH-1 can be composed of about 15 different subunits; different subcomplexes with different compositions have been identified which probably have different functions.

The protein resides in the cellular thylakoid membrane. The enzyme catalyses a plastoquinone + NADH + (n+1) H(+)(in) = a plastoquinol + NAD(+) + n H(+)(out). The catalysed reaction is a plastoquinone + NADPH + (n+1) H(+)(in) = a plastoquinol + NADP(+) + n H(+)(out). In terms of biological role, NDH-1 shuttles electrons from an unknown electron donor, via FMN and iron-sulfur (Fe-S) centers, to quinones in the respiratory and/or the photosynthetic chain. The immediate electron acceptor for the enzyme in this species is believed to be plastoquinone. Couples the redox reaction to proton translocation, and thus conserves the redox energy in a proton gradient. Cyanobacterial NDH-1 also plays a role in inorganic carbon-concentration. In Microcystis aeruginosa (strain NIES-843 / IAM M-2473), this protein is NAD(P)H-quinone oxidoreductase subunit 2.